The chain runs to 281 residues: sn-glycerol-3-phosphate transport system permease protein UgpE (281 aa).

The next 6 membrane-spanning stretches (helical) occupy residues 16-36 (LILG…AATL), 85-105 (FSIT…IVWF), 113-133 (FFWM…FPTV), 142-162 (LDSY…TFLF), 202-222 (ALFV…LLII), and 247-267 (WNSV…IVLV). The region spanning 77–268 (LLNSFVMAFS…IPPVVIVLVM (192 aa)) is the ABC transmembrane type-1 domain.

This sequence belongs to the binding-protein-dependent transport system permease family. UgpAE subfamily. As to quaternary structure, the complex is composed of two ATP-binding proteins (UgpC), two transmembrane proteins (UgpA and UgpE) and a solute-binding protein (UgpB).

It is found in the cell inner membrane. Functionally, part of the ABC transporter complex UgpBAEC involved in sn-glycerol-3-phosphate (G3P) import. Probably responsible for the translocation of the substrate across the membrane. The chain is sn-glycerol-3-phosphate transport system permease protein UgpE (ugpE) from Shigella dysenteriae serotype 1 (strain Sd197).